The chain runs to 337 residues: Casein kinase I isoform alpha-like (337 aa).

The residue at position 8 (Lys8) is an N6-acetyllysine. Residues 17–285 (YKLVRKIGSG…YLRQLFRILF (269 aa)) form the Protein kinase domain. ATP contacts are provided by residues 23–31 (IGSGSFGDV) and Lys46. Asp136 functions as the Proton acceptor in the catalytic mechanism. The span at 309–325 (AASSSGQGQQAQTQTGK) shows a compositional bias: low complexity. Residues 309–337 (AASSSGQGQQAQTQTGKQTEKNKNNVKDN) form a disordered region. Basic and acidic residues predominate over residues 326-337 (QTEKNKNNVKDN).

It belongs to the protein kinase superfamily. CK1 Ser/Thr protein kinase family. Casein kinase I subfamily. Interacts with FAM83A, FAM83B, FAM83C, FAM83D, FAM83E, FAM83F, FAM83G and FAM83H (via DUF1669).

It is found in the cytoplasm. It catalyses the reaction L-seryl-[protein] + ATP = O-phospho-L-seryl-[protein] + ADP + H(+). It carries out the reaction L-threonyl-[protein] + ATP = O-phospho-L-threonyl-[protein] + ADP + H(+). Casein kinases are operationally defined by their preferential utilization of acidic proteins such as caseins as substrates. It can phosphorylate a large number of proteins. Participates in Wnt signaling. The polypeptide is Casein kinase I isoform alpha-like (CSNK1A1L) (Homo sapiens (Human)).